We begin with the raw amino-acid sequence, 79 residues long: MKLFLVSIVLVGMLVLAAARPERDIDSFDEQEEKGFVKRGASCDCHPFVGTYWFGISNCPSGHGYRKKCASFFGVCCVK.

A signal peptide spans 1 to 19; the sequence is MKLFLVSIVLVGMLVLAAA. Residues 20-39 constitute a propeptide that is removed on maturation; that stretch reads RPERDIDSFDEQEEKGFVKR. 3 cysteine pairs are disulfide-bonded: Cys43–Cys76, Cys45–Cys69, and Cys59–Cys77.

It belongs to the sea anemone type 3 (BDS) potassium channel toxin family. As to expression, highly expressed by the mesenteries. Moderately expressed by the pharynx. Weakly expressed by the gonad and pedal disk. No expression in tentacle.

It localises to the secreted. It is found in the nematocyst. Peptide with both antimicrobial and neurotoxin activities. Cationic AMP with antibacterial activity against both Gram-positive bacteria (B.subtilis, MIC=11.49 ug/mL) and Gram-negative bacteria (E.coli (MIC=12.21 ug/mL) and S.enterica (MIC=11.95 ug/mL)). Shows no significant antimicrobial activity against bacteria S.aureus and P.aeruginosa, as well as the fungus C.albicans. In vivo, induces reversible paralytic activity towards the shrimp P.paucidens. May act by impairing sodium or potassium channels in the prey. This chain is Crassicorin-I, found in Urticina crassicornis (Mottled anemone).